A 288-amino-acid polypeptide reads, in one-letter code: 33 kDa chaperonin (288 aa).

Disulfide bonds link C233-C235 and C267-C270.

Belongs to the HSP33 family. Under oxidizing conditions two disulfide bonds are formed involving the reactive cysteines. Under reducing conditions zinc is bound to the reactive cysteines and the protein is inactive.

The protein localises to the cytoplasm. In terms of biological role, redox regulated molecular chaperone. Protects both thermally unfolding and oxidatively damaged proteins from irreversible aggregation. Plays an important role in the bacterial defense system toward oxidative stress. This is 33 kDa chaperonin from Actinobacillus succinogenes (strain ATCC 55618 / DSM 22257 / CCUG 43843 / 130Z).